We begin with the raw amino-acid sequence, 345 residues long: Nuclear distribution protein nudE-like 1 (345 aa).

Residues 28–190 (QSFQEARDEL…LAVRERQQEV (163 aa)) are a coiled coil. A self-association region spans residues 56–166 (VQAEQRNRDL…LDEKESLLVS (111 aa)). The interaction with KATNB1 stretch occupies residues 64–189 (DLQADNQRLK…ELAVRERQQE (126 aa)). The required for interaction with PAFAH1B1 stretch occupies residues 114-133 (YVRELEQANDDLERAKRATI). Positions 175–345 (RDLRQELAVR…SAPGMLPLSV (171 aa)) are interaction with CENPF. The interaction with YWHAE stretch occupies residues 189 to 256 (EVTRKSAPSS…SARISALNIV (68 aa)). Positions 191–345 (TRKSAPSSPT…SAPGMLPLSV (155 aa)) are interaction with NEFL. The interaction with KATNA1 stretch occupies residues 195–256 (APSSPTLDCE…SARISALNIV (62 aa)). Serine 215 is subject to Phosphoserine. A disordered region spans residues 217 to 240 (PATPVGKGTENSFPSPKAIPNGFG). Threonine 219 carries the post-translational modification Phosphothreonine. Serine 231 is modified (phosphoserine). The interval 241–280 (TSPLTPSARISALNIVGDLLRKVGALESKLAACRNFAKDQ) is interaction with DISC1. Residue serine 242 is modified to Phosphoserine; by CDK1. Threonine 245 is modified (phosphothreonine; by CDK1 and MAPK1). The required for localization to the centrosome and interaction with dynein, dynactin, tubulin gamma, PCM1 and PCNT stretch occupies residues 256 to 291 (VGDLLRKVGALESKLAACRNFAKDQASRKSYVPGSV). Residue cysteine 273 is the site of S-palmitoyl cysteine; by ZDHHC2, ZDHHC3 and ZDHHC7 attachment. A disordered region spans residues 314 to 345 (KGAVNGFDPAPPPPGLGSSRPSSAPGMLPLSV). Residues 329 to 339 (LGSSRPSSAPG) are compositionally biased toward low complexity. Serine 344 is modified (phosphoserine).

The protein belongs to the nudE family. Interacts with PLEKHM1 (via N- and C-terminus). Interacts with dynactin, PCM1 and PCNT. Interacts (via C-terminus) with CENPF. Self-associates. Interacts with DISC1, dynein, tubulin gamma, KATNA1, KATNB1, microtubules, PAFAHB1 and YWHAE. Interacts directly with NEFL and indirectly with NEFH. Interacts with ZNF365. Interacts with GTP-bound RAB9A; the interaction may lead to RAB9A-dynein motor tethering. In terms of processing, phosphorylated by CDK1 and MAPK1. Phosphorylated in mitosis. Phosphorylated by CDK5. Phosphorylation by CDK5 promotes interaction with KATNA1 and YWHAE. Post-translationally, palmitoylation at Cys-273 reduces affinity for dynein. Expressed in brain, liver, lung and testis (at protein level). Expressed in brain, epididymis, eye, heart, kidney, large intestine, liver, ovary, pancreas, prostate, skeletal muscle, smooth muscle, spleen, submaxillary gland, testis, thymus and thyroid. Within the brain expression is pronounced in the cortex, hippocampus, olfactory bulb, striatum, thalamic and hypothalamic structures and in the molecular layer of the cerebellum. Largely excluded from cortical progenitor cells which express NDE1.

The protein localises to the cytoplasm. It localises to the cytoskeleton. Its subcellular location is the microtubule organizing center. It is found in the centrosome. The protein resides in the chromosome. The protein localises to the centromere. It localises to the kinetochore. Its subcellular location is the spindle. Functionally, required for organization of the cellular microtubule array and microtubule anchoring at the centrosome. May regulate microtubule organization at least in part by targeting the microtubule severing protein KATNA1 to the centrosome. Also positively regulates the activity of the minus-end directed microtubule motor protein dynein. May enhance dynein-mediated microtubule sliding by targeting dynein to the microtubule plus ends. Required for several dynein- and microtubule-dependent processes such as the maintenance of Golgi integrity, the centripetal motion of secretory vesicles and the coupling of the nucleus and centrosome. Also required during brain development for the migration of newly formed neurons from the ventricular/subventricular zone toward the cortical plate. Plays a role, together with DISC1, in the regulation of neurite outgrowth. Required for mitosis in some cell types but appears to be dispensible for mitosis in cortical neuronal progenitors, which instead requires NDE1. Facilitates the polymerization of neurofilaments from the individual subunits NEFH and NEFL. Positively regulates lysosome peripheral distribution and ruffled border formation in osteoclasts. Plays a role, together with DISC1, in the regulation of neurite outgrowth. May act as a RAB9A/B effector that tethers RAB9-associated late endosomes to the dynein motor for their retrograde transport to the trans-Golgi network. This Mus musculus (Mouse) protein is Nuclear distribution protein nudE-like 1.